Here is a 1789-residue protein sequence, read N- to C-terminus: Protein TIC 214 (1789 aa).

The next 6 helical transmembrane spans lie at 19–39, 68–88, 91–111, 133–153, 176–196, and 227–247; these read IINSVVVVGLYYGFLTTFSIG, FIAGQLMMFISIYYAPLHLAL, PHTITVLALPYLLFHFFWNNH, VFLNNLIFQLFNHFILPSSML, VGWLIGHILFMKWVGLVLVWI, and IFSILLFITCVYYLGRIPSPI.

Belongs to the TIC214 family. In terms of assembly, part of the Tic complex.

It localises to the plastid. Its subcellular location is the chloroplast inner membrane. Functionally, involved in protein precursor import into chloroplasts. May be part of an intermediate translocation complex acting as a protein-conducting channel at the inner envelope. The chain is Protein TIC 214 from Capsella bursa-pastoris (Shepherd's purse).